The sequence spans 305 residues: Coiled-coil domain-containing protein 69-A (305 aa).

The N-myristoyl glycine moiety is linked to residue Gly-2. Residues 13 to 38 (LRKKKRQKAHQGGLTSQELNDLNAKT) form a disordered region. Residues 25–38 (GLTSQELNDLNAKT) are compositionally biased toward polar residues. Residues 42 to 281 (NEVLQKIKEY…QREKEQNLYR (240 aa)) adopt a coiled-coil conformation.

It belongs to the CCDC69 family.

It localises to the cytoplasm. The protein localises to the cytoskeleton. It is found in the spindle. Its subcellular location is the midbody. In terms of biological role, may act as a scaffold to regulate the recruitment and assembly of spindle midzone components. In Xenopus laevis (African clawed frog), this protein is Coiled-coil domain-containing protein 69-A (ccdc69-a).